Reading from the N-terminus, the 109-residue chain is T-cell surface glycoprotein CD1b (109 aa).

Positions 1-18 (MLLLPLLLLAGRFPGGDN) are cleaved as a signal peptide. Residues asparagine 38 and asparagine 75 are each glycosylated (N-linked (GlcNAc...) asparagine).

As to quaternary structure, heterodimer with B2M (beta-2-microglobulin). Interacts with saposin C. Expressed on cortical thymocytes, on certain T-cell leukemias, and in various other tissues.

It localises to the cell membrane. Its subcellular location is the endosome membrane. The protein resides in the lysosome membrane. Antigen-presenting protein that binds self and non-self lipid and glycolipid antigens and presents them to T-cell receptors on natural killer T-cells. The protein is T-cell surface glycoprotein CD1b (CD1B) of Oryctolagus cuniculus (Rabbit).